We begin with the raw amino-acid sequence, 546 residues long: Glucose-6-phosphate isomerase (546 aa).

The active-site Proton donor is Glu-357. Active-site residues include His-389 and Lys-509.

It belongs to the GPI family.

It is found in the cytoplasm. The catalysed reaction is alpha-D-glucose 6-phosphate = beta-D-fructose 6-phosphate. It participates in carbohydrate biosynthesis; gluconeogenesis. It functions in the pathway carbohydrate degradation; glycolysis; D-glyceraldehyde 3-phosphate and glycerone phosphate from D-glucose: step 2/4. Its function is as follows. Catalyzes the reversible isomerization of glucose-6-phosphate to fructose-6-phosphate. In Anaeromyxobacter sp. (strain K), this protein is Glucose-6-phosphate isomerase.